The sequence spans 403 residues: Glucose/galactose-binding lipoprotein (403 aa).

A signal peptide spans 1 to 25 (MKENSCTACSRRLALFVGAAVLVVG). Cys-26 carries N-palmitoyl cysteine lipidation. Residue Cys-26 is the site of S-diacylglycerol cysteine attachment.

This sequence belongs to the bacterial solute-binding protein 2 family.

It is found in the cell membrane. May be involved in the transport of sugars. May have a role in chemotaxis. This Treponema pallidum (strain Nichols) protein is Glucose/galactose-binding lipoprotein (mglB).